Here is a 753-residue protein sequence, read N- to C-terminus: 5-methyltetrahydropteroyltriglutamate--homocysteine methyltransferase (753 aa).

5-methyltetrahydropteroyltri-L-glutamate contacts are provided by residues 17–20 (RELK) and K117. Residues 431-433 (IGS) and E484 contribute to the L-homocysteine site. L-methionine is bound by residues 431 to 433 (IGS) and E484. 5-methyltetrahydropteroyltri-L-glutamate-binding positions include 515 to 516 (RC) and W561. Residue D599 participates in L-homocysteine binding. D599 provides a ligand contact to L-methionine. E605 contacts 5-methyltetrahydropteroyltri-L-glutamate. 3 residues coordinate Zn(2+): H641, C643, and E665. Catalysis depends on H694, which acts as the Proton donor. C726 provides a ligand contact to Zn(2+).

Belongs to the vitamin-B12 independent methionine synthase family. Zn(2+) is required as a cofactor.

The enzyme catalyses 5-methyltetrahydropteroyltri-L-glutamate + L-homocysteine = tetrahydropteroyltri-L-glutamate + L-methionine. It participates in amino-acid biosynthesis; L-methionine biosynthesis via de novo pathway; L-methionine from L-homocysteine (MetE route): step 1/1. Functionally, catalyzes the transfer of a methyl group from 5-methyltetrahydrofolate to homocysteine resulting in methionine formation. In Escherichia coli O139:H28 (strain E24377A / ETEC), this protein is 5-methyltetrahydropteroyltriglutamate--homocysteine methyltransferase.